Consider the following 304-residue polypeptide: Nucleotide-binding protein KRH_12070 (304 aa).

27-34 is an ATP binding site; sequence GMSGAGRS. 78 to 81 contacts GTP; the sequence is DVRG.

It belongs to the RapZ-like family.

Its function is as follows. Displays ATPase and GTPase activities. The protein is Nucleotide-binding protein KRH_12070 of Kocuria rhizophila (strain ATCC 9341 / DSM 348 / NBRC 103217 / DC2201).